The chain runs to 324 residues: Inhibitor of growth protein 1 homolog (324 aa).

The disordered stretch occupies residues 120–237; sequence AEEEKKKKKS…SSRKQKSMAA (118 aa). Over residues 140 to 169 the composition is skewed to low complexity; the sequence is SSTTSSSSSSSSSSLSLSSSTNNTSSLNSS. The segment covering 170–186 has biased composition (gly residues); that stretch reads SGGGGGGSGGGGGGGGH. A compositionally biased stretch (low complexity) spans 201–229; that stretch reads SLTSSSSSGNINGMSSSSSSSSSSSSLSS. The PHD-type zinc-finger motif lies at 271–320; the sequence is PTYCFCNRVSFGEMVGCENPDCKIEWFHFECVGLTSTPKGKWYCPDCTRI. Cysteine 274, cysteine 276, cysteine 287, cysteine 292, histidine 298, cysteine 301, cysteine 314, and cysteine 317 together coordinate Zn(2+).

The protein belongs to the ING family. Interacts with H3K4me3 and to a lesser extent with H3K4me2.

It localises to the nucleus. Involved in regulation of the growth and differentiation transition (GDT) process, probably by regulating gene expression via histone modification. This is Inhibitor of growth protein 1 homolog from Dictyostelium discoideum (Social amoeba).